The chain runs to 576 residues: Glutamine-dependent NAD(+) synthetase (576 aa).

Residues 4–246 (LRVTLAQLNP…EEIITVDLDL (243 aa)) form the CN hydrolase domain. Residue E44 is the Proton acceptor; for glutaminase activity of the active site. Residue K112 is the For glutaminase activity of the active site. Y118 is an L-glutamine binding site. C148 serves as the catalytic Nucleophile; for glutaminase activity. L-glutamine is bound by residues S176 and K182. The segment at 292-576 (PVREEEMFRA…PITNRFKEPL (285 aa)) is ligase. 321–328 (GLSGGMDS) serves as a coordination point for ATP. N404 is a binding site for deamido-NAD(+). Residue T428 participates in ATP binding. Positions 433 and 545 each coordinate deamido-NAD(+).

The protein in the C-terminal section; belongs to the NAD synthetase family.

The enzyme catalyses deamido-NAD(+) + L-glutamine + ATP + H2O = L-glutamate + AMP + diphosphate + NAD(+) + H(+). Its pathway is cofactor biosynthesis; NAD(+) biosynthesis; NAD(+) from deamido-NAD(+) (L-Gln route): step 1/1. Functionally, catalyzes the ATP-dependent amidation of deamido-NAD to form NAD. Uses L-glutamine as a nitrogen source. The chain is Glutamine-dependent NAD(+) synthetase (nadE2) from Thermotoga maritima (strain ATCC 43589 / DSM 3109 / JCM 10099 / NBRC 100826 / MSB8).